The sequence spans 207 residues: Large ribosomal subunit protein bL25 (207 aa).

The protein belongs to the bacterial ribosomal protein bL25 family. CTC subfamily. As to quaternary structure, part of the 50S ribosomal subunit; part of the 5S rRNA/L5/L18/L25 subcomplex. Contacts the 5S rRNA. Binds to the 5S rRNA independently of L5 and L18.

Functionally, this is one of the proteins that binds to the 5S RNA in the ribosome where it forms part of the central protuberance. In Orientia tsutsugamushi (strain Ikeda) (Rickettsia tsutsugamushi), this protein is Large ribosomal subunit protein bL25.